A 135-amino-acid polypeptide reads, in one-letter code: U-scoloptoxin(22)-Er1a (135 aa).

The signal sequence occupies residues 1–24 (MAVILKHLAIILLVFVIEIKMGQG). The disordered stretch occupies residues 61–135 (PQITFSTDWG…RSPRYLPTII (75 aa)). Positions 75–127 (SVNEDREAAERERSPQMKRSEHEEQLMAKDEMKRFQEERNPSSDDKIAIDKRS) are enriched in basic and acidic residues.

The protein belongs to the scoloptoxin-22 family. In terms of tissue distribution, expressed by the venom gland.

It is found in the secreted. The polypeptide is U-scoloptoxin(22)-Er1a (Ethmostigmus rubripes (Giant centipede)).